We begin with the raw amino-acid sequence, 505 residues long: Lysine--tRNA ligase (505 aa).

2 residues coordinate Mg(2+): Glu-415 and Glu-422.

This sequence belongs to the class-II aminoacyl-tRNA synthetase family. In terms of assembly, homodimer. Mg(2+) is required as a cofactor.

The protein localises to the cytoplasm. The catalysed reaction is tRNA(Lys) + L-lysine + ATP = L-lysyl-tRNA(Lys) + AMP + diphosphate. This chain is Lysine--tRNA ligase, found in Serratia proteamaculans (strain 568).